A 347-amino-acid polypeptide reads, in one-letter code: UDP-N-acetylenolpyruvoylglucosamine reductase (347 aa).

Residues 24–195 (FDARARVAAR…VAVTFRLPKA (172 aa)) enclose the FAD-binding PCMH-type domain. Arg-171 is a catalytic residue. Ser-247 (proton donor) is an active-site residue. Glu-343 is an active-site residue.

The protein belongs to the MurB family. FAD is required as a cofactor.

It localises to the cytoplasm. The enzyme catalyses UDP-N-acetyl-alpha-D-muramate + NADP(+) = UDP-N-acetyl-3-O-(1-carboxyvinyl)-alpha-D-glucosamine + NADPH + H(+). The protein operates within cell wall biogenesis; peptidoglycan biosynthesis. Functionally, cell wall formation. The chain is UDP-N-acetylenolpyruvoylglucosamine reductase from Burkholderia mallei (strain NCTC 10247).